Consider the following 152-residue polypeptide: Small ribosomal subunit protein uS8m (152 aa).

This sequence belongs to the universal ribosomal protein uS8 family. As to quaternary structure, component of the mitochondrial small ribosomal subunit (mt-SSU). Mature yeast 74S mitochondrial ribosomes consist of a small (37S) and a large (54S) subunit. The 37S small subunit contains a 15S ribosomal RNA (15S mt-rRNA) and at least 32 different proteins. The 54S large subunit contains a 21S rRNA (21S mt-rRNA) and at least 45 different proteins.

The protein localises to the mitochondrion. Component of the mitochondrial ribosome (mitoribosome), a dedicated translation machinery responsible for the synthesis of mitochondrial genome-encoded proteins, including at least some of the essential transmembrane subunits of the mitochondrial respiratory chain. The mitoribosomes are attached to the mitochondrial inner membrane and translation products are cotranslationally integrated into the membrane. This Schizosaccharomyces pombe (strain 972 / ATCC 24843) (Fission yeast) protein is Small ribosomal subunit protein uS8m (mrps8).